Reading from the N-terminus, the 591-residue chain is Metalloendopeptidase OPG085 (591 aa).

Histidine 41 is a Zn(2+) binding site. Glutamate 44 is an active-site residue. Positions 45 and 112 each coordinate Zn(2+).

It belongs to the peptidase M44 family. Zn(2+) is required as a cofactor. Undergoes proteolytic processing during the course of infection. May be cleaved into 46 kDa and 22 kDa products (Potential).

It localises to the virion. In terms of biological role, probably involved in maturation of some viral proteins by processing them preferentially at Ala-Gly-|-Ser/Thr/Lys motifs. Does not seem to be responsible for the cleavage of major core proteins. This Variola virus (isolate Human/India/Ind3/1967) (VARV) protein is Metalloendopeptidase OPG085 (OPG085).